The sequence spans 569 residues: Probable santalene synthase (569 aa).

Positions 284, 321, 325, 460, and 463 each coordinate (2E)-geranyl diphosphate. Mg(2+) contacts are provided by aspartate 321 and aspartate 325. The short motif at 321-325 is the DDXXD motif element; the sequence is DDAYD. Positions 463, 467, and 471 each coordinate Mg(2+).

It belongs to the terpene synthase family. Tpsb subfamily. Mg(2+) is required as a cofactor. It depends on Mn(2+) as a cofactor.

Functionally, catalyzes the formation of santalene. This Santalum murrayanum (Bitter quandong) protein is Probable santalene synthase (SSY).